The sequence spans 328 residues: Ketol-acid reductoisomerase (NADP(+)) (328 aa).

A KARI N-terminal Rossmann domain is found at 2-182 (AKIYRDGDAS…GATRAGVIET (181 aa)). NADP(+)-binding positions include 25–28 (YGIQ), Arg48, Ser53, and 83–86 (DMEQ). His108 is a catalytic residue. Gly134 serves as a coordination point for NADP(+). The region spanning 183–328 (TFAEETETDL…AEMRKLLFGP (146 aa)) is the KARI C-terminal knotted domain. Residues Asp191, Glu195, Glu227, and Glu231 each contribute to the Mg(2+) site. Ser252 lines the substrate pocket.

Belongs to the ketol-acid reductoisomerase family. It depends on Mg(2+) as a cofactor.

The catalysed reaction is (2R)-2,3-dihydroxy-3-methylbutanoate + NADP(+) = (2S)-2-acetolactate + NADPH + H(+). The enzyme catalyses (2R,3R)-2,3-dihydroxy-3-methylpentanoate + NADP(+) = (S)-2-ethyl-2-hydroxy-3-oxobutanoate + NADPH + H(+). It functions in the pathway amino-acid biosynthesis; L-isoleucine biosynthesis; L-isoleucine from 2-oxobutanoate: step 2/4. It participates in amino-acid biosynthesis; L-valine biosynthesis; L-valine from pyruvate: step 2/4. Its function is as follows. Involved in the biosynthesis of branched-chain amino acids (BCAA). Catalyzes an alkyl-migration followed by a ketol-acid reduction of (S)-2-acetolactate (S2AL) to yield (R)-2,3-dihydroxy-isovalerate. In the isomerase reaction, S2AL is rearranged via a Mg-dependent methyl migration to produce 3-hydroxy-3-methyl-2-ketobutyrate (HMKB). In the reductase reaction, this 2-ketoacid undergoes a metal-dependent reduction by NADPH to yield (R)-2,3-dihydroxy-isovalerate. The chain is Ketol-acid reductoisomerase (NADP(+)) from Pyrobaculum calidifontis (strain DSM 21063 / JCM 11548 / VA1).